The following is an 896-amino-acid chain: Pentatricopeptide repeat-containing protein At5g03800 (896 aa).

PPR repeat units follow at residues 113–143 (KTRL…LSSP), 144–178 (TVVS…GLVQ), 180–214 (NEYT…GFLN), 215–247 (SVFV…IPQR), 248–278 (DVAS…MNRV), 284–318 (DSFT…GLMQ), 319–349 (ELSV…MMAQ), 350–380 (DAVT…VTEK), 381–415 (NTIT…GVEL), 416–450 (TDFS…GTAF), 451–481 (NPCI…WPSN), 484–519 (SSKA…KLFL), 520–554 (DEVS…GYFS), 555–585 (DISL…MREH), 586–620 (DVIS…EIKP), 621–653 (DIIT…MKTI), and 659–689 (TTEH…MPVQ). The type E motif stretch occupies residues 694-769 (VLRALLDSCR…HPAKSWIIHE (76 aa)). The tract at residues 770–800 (NKIHSFHARDTSHPQEKDIYRGLEILIMECL) is type E(+) motif. Residues 801-896 (KVGYEPNTEY…NGKCSCRDLW (96 aa)) form a type DYW motif region.

This sequence belongs to the PPR family. PCMP-H subfamily.

May play a role in embryogenesis. In Arabidopsis thaliana (Mouse-ear cress), this protein is Pentatricopeptide repeat-containing protein At5g03800 (EMB175).